We begin with the raw amino-acid sequence, 3707 residues long: CUB and sushi domain-containing protein 3 (3707 aa).

Residues 1 to 21 (MKGIRKGESRAKESKPWEPGK) form a disordered region. Residues 1–42 (MKGIRKGESRAKESKPWEPGKRRCAKCGRLDFILMKKMGIKS) are Cytoplasmic-facing. The chain crosses the membrane as a helical span at residues 43–63 (GFTFWNLVFLLTVSCVKGFIY). Over 64 to 3630 (TCGGTLKGLN…NQPHGTNSSS (3567 aa)) the chain is Extracellular. 4 disulfides stabilise this stretch: cysteine 65–cysteine 91, cysteine 178–cysteine 218, cysteine 204–cysteine 235, and cysteine 241–cysteine 267. Residues 65–173 (CGGTLKGLNG…HGFKVYYEEL (109 aa)) enclose the CUB 1 domain. N-linked (GlcNAc...) asparagine glycans are attached at residues asparagine 73 and asparagine 90. The 62-residue stretch at 176–237 (SSCGNPGVPP…WDFPVPICRA (62 aa)) folds into the Sushi 1 domain. Residues 241-345 (CGGTMRGSSG…RGFSAPYQGS (105 aa)) enclose the CUB 2 domain. N-linked (GlcNAc...) asparagine glycans are attached at residues asparagine 361 and asparagine 409. Residues 394–435 (QRVQVTSLRNSGLDPNTSKDGLSPHPADTQSTRRRPRHAEQI) form a disordered region. Polar residues predominate over residues 396 to 413 (VQVTSLRNSGLDPNTSKD). The Sushi 2 domain occupies 484–545 (NLCPDPGEPE…WSDHRPVCKV (62 aa)). 6 disulfides stabilise this stretch: cysteine 486/cysteine 526, cysteine 512/cysteine 543, cysteine 548/cysteine 574, cysteine 664/cysteine 704, cysteine 690/cysteine 717, and cysteine 721/cysteine 747. The CUB 3 domain maps to 548 to 659 (CGSNLQGPSG…VGFKVNYKEI (112 aa)). In terms of domain architecture, Sushi 3 spans 662-719 (ESCGDPGTPLYGIREGDGFSNRDVLRFECQFGFELIGEKSIVCQENNQWSANIPICIF). The region spanning 721–829 (CLSNFTAPMG…RGFNITYNTF (109 aa)) is the CUB 4 domain. N-linked (GlcNAc...) asparagine glycosylation is found at asparagine 724 and asparagine 823. Residues 832–893 (NECPDPGIPI…WSGLIPKCGA (62 aa)) form the Sushi 4 domain. 3 disulfides stabilise this stretch: cysteine 834-cysteine 875, cysteine 860-cysteine 891, and cysteine 895-cysteine 921. One can recognise a CUB 5 domain in the interval 895 to 1003 (CGGHFSAPSG…NGFKIHYESV (109 aa)). An N-linked (GlcNAc...) asparagine glycan is attached at asparagine 966. Positions 1008-1065 (YSCLDPGIPVHGRRYGHDFSIGSTVSFSCDSGYRLSHEEPLLCEKNHWWSHPLPTCDA) constitute a Sushi 5 domain. Cystine bridges form between cysteine 1010/cysteine 1050, cysteine 1036/cysteine 1063, and cysteine 1067/cysteine 1093. In terms of domain architecture, CUB 6 spans 1067–1177 (CGGDVRGPSG…EGFNITFSEY (111 aa)). Residues asparagine 1092, asparagine 1126, and asparagine 1171 are each glycosylated (N-linked (GlcNAc...) asparagine). Positions 1180–1239 (EPCEDPGIPQYGSRIGFNFGIGDTLTFSCSSGYRLEGTSEIICLGGGRRVWSAPLPRCVA) constitute a Sushi 6 domain. Cystine bridges form between cysteine 1182/cysteine 1222, cysteine 1208/cysteine 1237, and cysteine 1241/cysteine 1267. The CUB 7 domain maps to 1241–1349 (CGASATNNEG…EGFQLVYTSF (109 aa)). N-linked (GlcNAc...) asparagine glycosylation is present at asparagine 1280. A Sushi 7 domain is found at 1352 to 1412 (SHCEDPGIPQ…WDYPLPSCIA (61 aa)). Cystine bridges form between cysteine 1354–cysteine 1395, cysteine 1381–cysteine 1410, cysteine 1414–cysteine 1441, cysteine 1528–cysteine 1568, cysteine 1554–cysteine 1584, cysteine 1588–cysteine 1614, cysteine 1701–cysteine 1741, cysteine 1727–cysteine 1758, cysteine 1762–cysteine 1788, cysteine 1878–cysteine 1918, cysteine 1904–cysteine 1935, and cysteine 1939–cysteine 1965. One can recognise a CUB 8 domain in the interval 1414-1523 (CGGRFKGESS…SGFAIQFSSS (110 aa)). The Sushi 8 domain maps to 1526-1586 (TACRDPGVPM…WQPSPPVCIA (61 aa)). Asparagine 1536 is a glycosylation site (N-linked (GlcNAc...) asparagine). The 109-residue stretch at 1588-1696 (CGGNLTGSSG…TGFHLEYKAK (109 aa)) folds into the CUB 9 domain. N-linked (GlcNAc...) asparagine glycosylation is found at asparagine 1591 and asparagine 1709. The 62-residue stretch at 1699–1760 (ESCFDPGNIM…WNRALPSCHA (62 aa)) folds into the Sushi 9 domain. Residues 1762-1870 (CGSRSTGSEG…KGFHFVYQAV (109 aa)) enclose the CUB 10 domain. Asparagine 1781 carries an N-linked (GlcNAc...) asparagine glycan. One can recognise a Sushi 10 domain in the interval 1876 to 1937 (TQCSSVPEPR…WNDSLPTCIV (62 aa)). An N-linked (GlcNAc...) asparagine glycan is attached at asparagine 1929. The 109-residue stretch at 1939–2047 (CGGILTKRKG…AGFHLEYTAI (109 aa)) folds into the CUB 11 domain. N-linked (GlcNAc...) asparagine glycosylation is present at asparagine 2019. The 60-residue stretch at 2050–2109 (DSCPEPQTPSSGIKIGDRYMVGDVVSFQCDQGYSLQGHSHITCMPGPVRRWNYPIPICLA) folds into the Sushi 11 domain. Intrachain disulfides connect cysteine 2052-cysteine 2092, cysteine 2078-cysteine 2107, and cysteine 2111-cysteine 2137. The CUB 12 domain occupies 2111–2219 (CGGAMSDFSG…QGFHIVYQAY (109 aa)). Asparagine 2155 is a glycosylation site (N-linked (GlcNAc...) asparagine). The 60-residue stretch at 2222 to 2281 (QSCPDPRPFRNGFVIGNDFTVGQTISFECFPGYTLIGNSALTCLHGVSRNWNHPLPRCEA) folds into the Sushi 12 domain. 3 disulfide bridges follow: cysteine 2224–cysteine 2264, cysteine 2250–cysteine 2279, and cysteine 2283–cysteine 2309. The 112-residue stretch at 2283 to 2394 (CGGNITAMNG…LSYHAYQLRV (112 aa)) folds into the CUB 13 domain. N-linked (GlcNAc...) asparagine glycans are attached at residues asparagine 2286, asparagine 2291, and asparagine 2324. The Sushi 13 domain maps to 2393 to 2454 (RVCQPPPPVP…MDGAPPVCQV (62 aa)). 3 cysteine pairs are disulfide-bonded: cysteine 2395/cysteine 2437, cysteine 2423/cysteine 2452, and cysteine 2456/cysteine 2484. In terms of domain architecture, CUB 14 spans 2456 to 2567 (CPANELRLDS…KGFRIRYIAF (112 aa)). Residues asparagine 2495 and asparagine 2537 are each glycosylated (N-linked (GlcNAc...) asparagine). Sushi domains are found at residues 2567–2629 (FYCS…ACQA), 2630–2691 (ISCG…RCVV), 2692–2756 (VTCP…YCQI), 2757–2814 (ISCG…RCLA), 2815–2872 (GHCG…SCVP), 2873–2930 (VSCG…MCKV), 2931–2992 (VNCS…ECIM), 2993–3050 (IDCG…HCSG), 3054–3111 (GTCG…ECKA), 3112–3170 (VQCG…NCTI), 3171–3230 (ISCG…TCRA), 3231–3288 (VTCP…QCLP), 3289–3346 (KFCG…HCIE), 3350–3408 (TSCE…ECIP), and 3409–3468 (HSCK…ICEA). Disulfide bonds link cysteine 2569–cysteine 2610, cysteine 2596–cysteine 2627, cysteine 2632–cysteine 2674, cysteine 2658–cysteine 2689, cysteine 2694–cysteine 2739, cysteine 2725–cysteine 2754, cysteine 2759–cysteine 2799, cysteine 2785–cysteine 2812, cysteine 2817–cysteine 2857, cysteine 2843–cysteine 2870, cysteine 2875–cysteine 2915, and cysteine 2901–cysteine 2928. 2 N-linked (GlcNAc...) asparagine glycosylation sites follow: asparagine 2711 and asparagine 2742. Asparagine 2862 is a glycosylation site (N-linked (GlcNAc...) asparagine). Asparagine 2932 and asparagine 2952 each carry an N-linked (GlcNAc...) asparagine glycan. Intrachain disulfides connect cysteine 2933–cysteine 2977, cysteine 2963–cysteine 2990, cysteine 2995–cysteine 3035, cysteine 3021–cysteine 3048, cysteine 3056–cysteine 3096, cysteine 3082–cysteine 3109, cysteine 3114–cysteine 3155, cysteine 3141–cysteine 3168, cysteine 3173–cysteine 3215, cysteine 3199–cysteine 3228, cysteine 3233–cysteine 3273, cysteine 3259–cysteine 3286, cysteine 3291–cysteine 3331, cysteine 3317–cysteine 3344, cysteine 3352–cysteine 3393, cysteine 3379–cysteine 3406, cysteine 3411–cysteine 3453, and cysteine 3438–cysteine 3466. Asparagine 3099 is a glycosylation site (N-linked (GlcNAc...) asparagine). N-linked (GlcNAc...) asparagine glycans are attached at residues asparagine 3158, asparagine 3167, asparagine 3194, asparagine 3208, and asparagine 3218. The N-linked (GlcNAc...) asparagine glycan is linked to asparagine 3276. The N-linked (GlcNAc...) asparagine glycan is linked to asparagine 3364. N-linked (GlcNAc...) asparagine glycans are attached at residues asparagine 3522, asparagine 3529, asparagine 3612, asparagine 3618, and asparagine 3627. The chain crosses the membrane as a helical span at residues 3631 to 3651 (VAIAILVPFFALIFAGFGFYL). The Cytoplasmic segment spans residues 3652–3707 (YKQRTAPKTQYTGCSVHENNNGQAAFENPMYDTNAKSVEGKAVRFDPNLNTVCTMV).

The protein belongs to the CSMD family. Weakly expressed in most tissues, except in brain. Expressed at intermediate level in brain, including cerebellum, substantia nigra, thalamus, spinal cord, hippocampus and fetal brain. Also expressed in testis.

It localises to the cell membrane. In terms of biological role, involved in dendrite development. The chain is CUB and sushi domain-containing protein 3 (CSMD3) from Homo sapiens (Human).